An 85-amino-acid polypeptide reads, in one-letter code: UPF0386 protein RHECIAT_CH0001945 (85 aa).

It belongs to the UPF0386 family.

This Rhizobium etli (strain CIAT 652) protein is UPF0386 protein RHECIAT_CH0001945.